Reading from the N-terminus, the 320-residue chain is ATP-dependent 6-phosphofructokinase (320 aa).

Residues Gly12, 73 to 74, and 103 to 106 contribute to the ATP site; these read RF and GDGS. Residue Asp104 coordinates Mg(2+). Position 126-128 (126-128) interacts with substrate; that stretch reads TID. Residue Asp128 is the Proton acceptor of the active site. Position 155 (Arg155) interacts with ADP. Substrate is bound by residues Arg163 and 170–172; that span reads MGR. ADP is bound by residues 186–188 and Lys212; that span reads GCE. Residues Glu223, Arg244, and 250–253 contribute to the substrate site; that span reads HIQR.

It belongs to the phosphofructokinase type A (PFKA) family. ATP-dependent PFK group I subfamily. Prokaryotic clade 'B1' sub-subfamily. Homotetramer. Mg(2+) is required as a cofactor.

Its subcellular location is the cytoplasm. The enzyme catalyses beta-D-fructose 6-phosphate + ATP = beta-D-fructose 1,6-bisphosphate + ADP + H(+). Its pathway is carbohydrate degradation; glycolysis; D-glyceraldehyde 3-phosphate and glycerone phosphate from D-glucose: step 3/4. Allosterically activated by ADP and other diphosphonucleosides, and allosterically inhibited by phosphoenolpyruvate. Catalyzes the phosphorylation of D-fructose 6-phosphate to fructose 1,6-bisphosphate by ATP, the first committing step of glycolysis. The polypeptide is ATP-dependent 6-phosphofructokinase (Buchnera aphidicola subsp. Cinara cedri (strain Cc)).